A 336-amino-acid polypeptide reads, in one-letter code: Ethanol acetyltransferase 1 (336 aa).

The transit peptide at Met-1–Leu-14 directs the protein to the mitochondrion. One can recognise an AB hydrolase-1 domain in the interval Pro-44–Gln-296. Catalysis depends on charge relay system residues Ser-117, Asp-141, and His-291.

This sequence belongs to the AB hydrolase superfamily.

It is found in the mitochondrion. It carries out the reaction ethanol + acetyl-CoA = ethyl acetate + CoA. The catalysed reaction is acetyl-CoA + H2O = acetate + CoA + H(+). It catalyses the reaction ethyl acetate + H2O = ethanol + acetate + H(+). Alcohol acetyltransferase that catalyzes the synthesis of ethyl acetate from ethanol and acetyl-CoA. Can also function as a thioesterase by hydrolyzing acetyl-CoA in the absence of ethanol, as well as esterase hydrolyzing ethyl acetate. The chain is Ethanol acetyltransferase 1 (EAT1) from Cyberlindnera jadinii (strain ATCC 18201 / CBS 1600 / BCRC 20928 / JCM 3617 / NBRC 0987 / NRRL Y-1542) (Torula yeast).